Reading from the N-terminus, the 70-residue chain is Conotoxin ArMKLT2-0111 (70 aa).

Residues 1 to 22 form the signal peptide; that stretch reads MKLTCVLIIAVLFLTACQLTTG. Positions 23 to 40 are excised as a propeptide; it reads EQKDHALRSTDKNSKLTR. Gln41 bears the Pyrrolidone carboxylic acid mark. Cystine bridges form between Cys42/Cys56, Cys49/Cys60, and Cys55/Cys67.

The protein belongs to the conotoxin O1 superfamily. As to expression, expressed by the venom duct.

Its subcellular location is the secreted. The protein is Conotoxin ArMKLT2-0111 of Conus arenatus (Sand-dusted cone).